The primary structure comprises 436 residues: Voltage-gated potassium channel regulatory subunit KCNG3 (436 aa).

The Cytoplasmic portion of the chain corresponds to 1–168 (MTFGRSGAAS…RTFEEPTSSL (168 aa)). A helical transmembrane segment spans residues 169-190 (AAQILASVSVVFVIVSMVVLCA). Residues 191–220 (STLPDWRNAAADNRSLDDRSRYSAGPGREP) lie on the Extracellular side of the membrane. Residues 221-242 (SGIIEAICIGWFTAECIVRFIV) traverse the membrane as a helical segment. Residues 243–253 (SKNKCEFVKRP) are Cytoplasmic-facing. Residues 254-274 (LNIIDLLAITPYYISVLMTVF) form a helical membrane-spanning segment. The Extracellular segment spans residues 275–284 (TGENSQLQRA). The helical; Voltage-sensor transmembrane segment at 285-305 (GVTLRVLRMMRIFWVIKLARH) threads the bilayer. Residues 306 to 320 (FIGLQTLGLTLKRCY) lie on the Cytoplasmic side of the membrane. The chain crosses the membrane as a helical span at residues 321–342 (REMVMLLVFICVAMAIFSALSQ). Over 343–360 (LLEHGLDLETSNKDFTSI) the chain is Extracellular. An intramembrane region (helical) is located at residues 361 to 372 (PAACWWVIISMT). The Selectivity filter motif lies at 373-378 (TVGYGD). The stretch at 373-380 (TVGYGDMY) is an intramembrane region. At 381–387 (PITVPGR) the chain is on the extracellular side. A helical membrane pass occupies residues 388-416 (ILGGVCVVSGIVLLALPITFIYHSFVQCY). The Cytoplasmic portion of the chain corresponds to 417–436 (HELKFRSARYSRSLSTEFLN).

Belongs to the potassium channel family. G (TC 1.A.1.2) subfamily. Kv6.3/KCNG3 sub-subfamily. Heterotetramer with KCNB1. Does not form homomultimers. As to expression, expressed in the brain, liver, testis, small intestine, colon, thymus and adrenal gland.

The protein localises to the cell membrane. Its subcellular location is the cytoplasm. Its function is as follows. Regulatory subunit of the voltage-gated potassium (Kv) channel which, when coassembled with KCNB1, modulates the kinetics parameters of the heterotetrameric channel namely the inactivation and deactivation rate. Potassium channel subunit that does not form functional channels by itself. Reduces the deactivation rate. Moderately accelerates activation. The chain is Voltage-gated potassium channel regulatory subunit KCNG3 from Homo sapiens (Human).